We begin with the raw amino-acid sequence, 97 residues long: Small integral membrane protein 8 (97 aa).

The tract at residues Met-1–Gly-24 is disordered. The segment covering Thr-9–Phe-20 has biased composition (basic and acidic residues). Residues Pro-48 to Ile-70 traverse the membrane as a helical segment.

This sequence belongs to the SMIM8 family.

The protein resides in the membrane. This chain is Small integral membrane protein 8 (SMIM8), found in Homo sapiens (Human).